The chain runs to 444 residues: Ribosome biogenesis protein WDR12 homolog (444 aa).

Residues Val7–Pro87 are ubiquitin-like (UBL) domain. Residues Pro91–Ser123 are disordered. WD repeat units follow at residues Ser105–Val148, Ala150–Ala191, and Gly203–Ala242. The interval Gly243 to Gly264 is disordered. WD repeat units follow at residues Gly272–Thr310, Asn312–Ala352, Ala360–Met400, and His403–Ser444.

The protein belongs to the WD repeat WDR12/YTM1 family.

Its subcellular location is the nucleus. The protein localises to the nucleolus. It is found in the nucleoplasm. Required for maturation of ribosomal RNAs and formation of the large ribosomal subunit. In Chlamydomonas reinhardtii (Chlamydomonas smithii), this protein is Ribosome biogenesis protein WDR12 homolog.